The primary structure comprises 157 residues: 2-C-methyl-D-erythritol 2,4-cyclodiphosphate synthase (157 aa).

A divalent metal cation is bound by residues Asp8 and His10. 4-CDP-2-C-methyl-D-erythritol 2-phosphate is bound by residues 8–10 (DVH) and 34–35 (HS). A divalent metal cation is bound at residue His42. 4-CDP-2-C-methyl-D-erythritol 2-phosphate contacts are provided by residues 56 to 58 (DIG), 61 to 65 (FPDTD), 132 to 135 (TTTE), Phe139, and Arg142.

The protein belongs to the IspF family. In terms of assembly, homotrimer. The cofactor is a divalent metal cation.

It carries out the reaction 4-CDP-2-C-methyl-D-erythritol 2-phosphate = 2-C-methyl-D-erythritol 2,4-cyclic diphosphate + CMP. The protein operates within isoprenoid biosynthesis; isopentenyl diphosphate biosynthesis via DXP pathway; isopentenyl diphosphate from 1-deoxy-D-xylulose 5-phosphate: step 4/6. Functionally, involved in the biosynthesis of isopentenyl diphosphate (IPP) and dimethylallyl diphosphate (DMAPP), two major building blocks of isoprenoid compounds. Catalyzes the conversion of 4-diphosphocytidyl-2-C-methyl-D-erythritol 2-phosphate (CDP-ME2P) to 2-C-methyl-D-erythritol 2,4-cyclodiphosphate (ME-CPP) with a corresponding release of cytidine 5-monophosphate (CMP). The sequence is that of 2-C-methyl-D-erythritol 2,4-cyclodiphosphate synthase from Geobacter metallireducens (strain ATCC 53774 / DSM 7210 / GS-15).